Here is a 604-residue protein sequence, read N- to C-terminus: Glutamine--fructose-6-phosphate aminotransferase [isomerizing] (604 aa).

The active-site Nucleophile; for GATase activity is the cysteine 2. Residues 2–216 form the Glutamine amidotransferase type-2 domain; that stretch reads CGIVGYVGFR…DGDVVRLTRE (215 aa). SIS domains lie at 281–420 and 453–594; these read LALD…ARGA and VAEK…VDQP. Lysine 599 serves as the catalytic For Fru-6P isomerization activity.

Homodimer.

It localises to the cytoplasm. It catalyses the reaction D-fructose 6-phosphate + L-glutamine = D-glucosamine 6-phosphate + L-glutamate. Its function is as follows. Catalyzes the first step in hexosamine metabolism, converting fructose-6P into glucosamine-6P using glutamine as a nitrogen source. This chain is Glutamine--fructose-6-phosphate aminotransferase [isomerizing], found in Thermus thermophilus (strain ATCC BAA-163 / DSM 7039 / HB27).